The following is an 830-amino-acid chain: Probable glucan 1,3-beta-glucosidase D (830 aa).

2 stretches are compositionally biased toward basic and acidic residues: residues 1 to 11 (MPGHSRSRDRL) and 74 to 84 (VHEHDHDHEYD). Disordered stretches follow at residues 1–91 (MPGH…EEPW), 127–163 (MSGA…QRRK), and 260–297 (GGPG…STSA). The Cytoplasmic segment spans residues 1 to 307 (MPGHSRSRDR…RPSFWKRYHK (307 aa)). Residues 147 to 163 (GKGKKRLDRETRRQRRK) show a composition bias toward basic residues. A helical; Signal-anchor for type II membrane protein membrane pass occupies residues 308 to 328 (TFIFFAILIVLAAIAIPVGII). Topologically, residues 329-830 (EARRLHGTSG…PSFGNLPEYY (502 aa)) are extracellular. N-linked (GlcNAc...) asparagine glycosylation is found at Asn341, Asn376, Asn381, Asn393, Asn397, Asn546, and Asn558. Residue Glu597 is the Proton donor of the active site. Residues Asn610, Asn669, and Asn689 are each glycosylated (N-linked (GlcNAc...) asparagine). Glu702 functions as the Nucleophile in the catalytic mechanism.

The protein belongs to the glycosyl hydrolase 5 (cellulase A) family.

It is found in the cell membrane. It catalyses the reaction Successive hydrolysis of beta-D-glucose units from the non-reducing ends of (1-&gt;3)-beta-D-glucans, releasing alpha-glucose.. Glucosidase involved in the degradation of cellulosic biomass. Active on lichenan. The polypeptide is Probable glucan 1,3-beta-glucosidase D (exgD) (Aspergillus niger (strain ATCC MYA-4892 / CBS 513.88 / FGSC A1513)).